Here is a 325-residue protein sequence, read N- to C-terminus: Germination protease (325 aa).

The propeptide occupies 1-7 (MYNVRTD).

The protein belongs to the peptidase A25 family. In terms of assembly, homotetramer. Autoproteolytically processed. The inactive tetrameric zymogen termed p46 autoprocesses to a smaller form termed p41, which is active only during spore germination.

The enzyme catalyses Endopeptidase action with P4 Glu or Asp, P1 preferably Glu &gt; Asp, P1' hydrophobic and P2' Ala.. Initiates the rapid degradation of small, acid-soluble proteins during spore germination. In Clostridium perfringens (strain SM101 / Type A), this protein is Germination protease.